We begin with the raw amino-acid sequence, 352 residues long: Keratocan (352 aa).

The signal sequence occupies residues 1–20 (MASTICFILWVVFVTDTVWT). Residues 33–71 (EDWTMHDFDCPRECFCPPSFPTALYCENRGLKEIPAIPS) form the LRRNT domain. 2 cysteine pairs are disulfide-bonded: cysteine 42-cysteine 48 and cysteine 46-cysteine 58. 8 LRR repeats span residues 72-93 (RIWYLYLENNLIETIPEKPFEN), 96-117 (QLRWINLNKNKITNYGIEKGAL), 122-142 (KLLFLFLEDNELEEVPSPLPR), 143-164 (SLEQLQLARNKVSRIPQGTFSN), 167-180 (NLTLLDLQHNKLLD), 193-214 (NLMQLNMAKNALRNMPPRLPAN), 215-235 (TMQVFLDNNSIEGIPENYFNV), and 238-258 (KVAFLRLNHNKLSDAGLPSSG). The N-linked (GlcNAc...) (keratan sulfate) asparagine glycan is linked to asparagine 93. Residue asparagine 167 is glycosylated (N-linked (GlcNAc...) (keratan sulfate) asparagine). An N-linked (GlcNAc...) asparagine glycan is attached at asparagine 222. Residue asparagine 260 is glycosylated (N-linked (GlcNAc...) (keratan sulfate) asparagine). LRR repeat units follow at residues 263–282 (SILDLQLSHNQLTKVPKISA) and 283–304 (HLQHLHLDHNKIRNVNVSVICP). N-linked (GlcNAc...) asparagine glycosylation occurs at asparagine 298. A disulfide bridge links cysteine 303 with cysteine 343.

It belongs to the small leucine-rich proteoglycan (SLRP) family. SLRP class II subfamily. Post-translationally, binds three long, highly sulfated keratan sulfate chains in the cornea but short, non-sulfated poly(N-acetyllactosamine) chains in other tissues. The N-terminus is blocked. Abundant in cornea and sclera but also found in other tissues.

Its subcellular location is the secreted. It localises to the extracellular space. It is found in the extracellular matrix. Functionally, may be important in developing and maintaining corneal transparency and for the structure of the stromal matrix. The sequence is that of Keratocan (KERA) from Bos taurus (Bovine).